Here is a 334-residue protein sequence, read N- to C-terminus: Malate dehydrogenase, cytoplasmic (334 aa).

Ser-2 bears the N-acetylserine mark. NAD(+) is bound by residues 11–17 (GAAGQIA) and Asp-42. Substrate contacts are provided by Arg-92 and Arg-98. Residue Asn-105 participates in NAD(+) binding. Lys-110 is subject to N6-succinyllysine. Gln-112 contributes to the NAD(+) binding site. An N6-acetyllysine mark is found at Lys-118 and Lys-121. 129–131 (VGN) contributes to the NAD(+) binding site. The substrate site is built by Asn-131 and Arg-162. Catalysis depends on His-187, which acts as the Proton acceptor. Lys-214 is modified (N6-succinyllysine). Ser-217 bears the Phosphoserine mark. Omega-N-methylarginine is present on Arg-230. A Phosphoserine modification is found at Ser-241. Residue Lys-298 is modified to N6-acetyllysine; alternate. At Lys-298 the chain carries N6-succinyllysine; alternate. Ser-309 bears the Phosphoserine mark. An N6-succinyllysine modification is found at Lys-318. Ser-332 and Ser-333 each carry phosphoserine.

It belongs to the LDH/MDH superfamily. MDH type 2 family. As to quaternary structure, homodimer. In terms of processing, ISGylated. Post-translationally, acetylation at Lys-118 dramatically enhances enzymatic activity and promotes adipogenic differentiation.

It localises to the cytoplasm. The protein resides in the cytosol. The catalysed reaction is (S)-malate + NAD(+) = oxaloacetate + NADH + H(+). It carries out the reaction (2R)-2-hydroxy-3-(4-hydroxyphenyl)propanoate + NAD(+) = 3-(4-hydroxyphenyl)pyruvate + NADH + H(+). The enzyme catalyses (S)-2-hydroxyglutarate + NAD(+) = 2-oxoglutarate + NADH + H(+). In terms of biological role, catalyzes the reduction of aromatic alpha-keto acids in the presence of NADH. Plays essential roles in the malate-aspartate shuttle and the tricarboxylic acid cycle, important in mitochondrial NADH supply for oxidative phosphorylation. Catalyzes the reduction of 2-oxoglutarate to 2-hydroxyglutarate, leading to elevated reactive oxygen species (ROS). This is Malate dehydrogenase, cytoplasmic from Homo sapiens (Human).